Consider the following 918-residue polypeptide: Eukaryotic translation initiation factor 3 subunit C (918 aa).

The disordered stretch occupies residues 1–174; sequence MSRFFKGGSS…EEEGRRVVKS (174 aa). 5 positions are modified to phosphoserine: S10, S12, S16, S19, and S20. Composition is skewed to acidic residues over residues 36–47, 54–67, and 79–128; these read SSSEEESSEEES, ESSEEESESEESEV, and EDSE…ESDE. The residue at position 667 (T667) is a Phosphothreonine. Positions 681-856 constitute a PCI domain; the sequence is FHMHINLELL…GAIIFERVEI (176 aa). Residues 879-918 form a disordered region; the sequence is KLYEQKTQHTNPQENRRRDKGGSVKRRNERTENRNRSDMN. Residues 907-918 are compositionally biased toward basic and acidic residues; that stretch reads ERTENRNRSDMN.

This sequence belongs to the eIF-3 subunit C family. In terms of assembly, component of the eukaryotic translation initiation factor 3 (eIF-3) complex. The eIF-3 complex appears to include tif32/eif3a, SPAC25G10.08/eif3b, tif33/eif3c, SPBC4C3.07/eif3f, tif35/eif3g and sum1/eif3i. This set of common subunits may also associate exclusively with either moe1/eif3d and int6/eif3e, or with SPAC821.05/eif3h and SPAC1751.03/eif3m. The eIF-3 complex may also include SPAC3A12.13c/eif3j.

The protein resides in the cytoplasm. Its function is as follows. Component of the eukaryotic translation initiation factor 3 (eIF-3) complex, which is involved in protein synthesis of a specialized repertoire of mRNAs and, together with other initiation factors, stimulates binding of mRNA and methionyl-tRNAi to the 40S ribosome. The eIF-3 complex specifically targets and initiates translation of a subset of mRNAs involved in cell proliferation. The polypeptide is Eukaryotic translation initiation factor 3 subunit C (nip1) (Schizosaccharomyces pombe (strain 972 / ATCC 24843) (Fission yeast)).